A 268-amino-acid chain; its full sequence is Serine/arginine-rich splicing factor SR30 (268 aa).

2 consecutive RRM domains span residues 7–82 (RTIY…IAHG) and 109–187 (YRVL…EYES). Over residues 186–199 (ESRSVSRSPDDSKS) the composition is skewed to basic and acidic residues. The segment at 186–268 (ESRSVSRSPD…NSPVSPVISG (83 aa)) is disordered. 11 positions are modified to phosphoserine: Ser193, Ser210, Ser212, Ser214, Ser219, Ser221, Ser227, Ser236, Ser246, Ser256, and Ser260. Residues 207 to 247 (RGPSCSYSSKSRSVSPARSISPRSRPLSRSRSLYSSVSRSQ) are compositionally biased toward low complexity. Positions 257-268 (RSNSPVSPVISG) are enriched in low complexity.

It belongs to the splicing factor SR family. SR subfamily. Component of the spliceosome. Interacts with SNRNP35, CYP59 and CYP63. Phosphorylated. Ubiquitous.

Its subcellular location is the nucleus speckle. It is found in the nucleus. The protein resides in the nucleoplasm. It localises to the cytoplasm. Functionally, regulatory splicing factor that modulates alternative splicing and gene expression in specific cell types. Autoregulates its own expression. Probably involved in intron recognition and spliceosome assembly. The polypeptide is Serine/arginine-rich splicing factor SR30 (SR30) (Arabidopsis thaliana (Mouse-ear cress)).